Consider the following 284-residue polypeptide: Anaerobic dimethyl sulfoxide reductase chain YnfH (284 aa).

Over 1–9 the chain is Periplasmic; the sequence is MGNGWHEWP. The chain crosses the membrane as a helical span at residues 10–30; the sequence is LVIFTVLGQCVVGALIVSGIG. Over 31-45 the chain is Cytoplasmic; that stretch reads WFAAKNDADRQRIVR. Residues 46 to 66 form a helical membrane-spanning segment; it reads GMFFLWLLMGVGFIASVMHLG. Residues 67–86 are Periplasmic-facing; it reads SPLRAFNSLNRIGASGLSNE. A helical membrane pass occupies residues 87-107; that stretch reads IAAGSIFFAVGGLWWLVAVIG. Topologically, residues 108 to 115 are cytoplasmic; the sequence is KMPQALGK. A helical transmembrane segment spans residues 116–136; it reads LWLLFSMALGVIFVWMMTCVY. The Periplasmic portion of the chain corresponds to 137 to 148; that stretch reads QIDTVPTWHNGY. A helical transmembrane segment spans residues 149 to 169; it reads TTLAFFLTVLLSGPILAAAIL. The Cytoplasmic portion of the chain corresponds to 170–180; sequence RAARVTFNTTP. A helical membrane pass occupies residues 181–201; sequence FAIISVLALIACAGVIVLQGL. The Periplasmic segment spans residues 202-222; that stretch reads SLASIHSSVQQASALVPDYAS. Residues 223-243 traverse the membrane as a helical segment; it reads LQVWRVVLLCAGLGCWLCPLI. Residues 244 to 250 are Cytoplasmic-facing; it reads RRREPHV. A helical membrane pass occupies residues 251 to 271; sequence AGLILGLILILGGEMIGRVLF. At 272-284 the chain is on the periplasmic side; that stretch reads YGLHMTVGMAIAG.

This sequence belongs to the DmsC family. In terms of assembly, the complex consists of three subunits: YnfF, the reductase; YnfG, an electron transfer protein, and YnfH, a membrane anchor protein.

It localises to the cell inner membrane. Its function is as follows. Terminal reductase during anaerobic growth on various sulfoxide and N-oxide compounds. The C subunit anchors the other two subunits to the membrane and stabilize the catalytic subunits. This is Anaerobic dimethyl sulfoxide reductase chain YnfH (ynfH) from Escherichia coli (strain K12).